The sequence spans 336 residues: TBC1 domain family member 21 (336 aa).

Residues 57 to 265 (GLHPFVRTEA…RLWEVLLTGK (209 aa)) form the Rab-GAP TBC domain.

As to quaternary structure, interacts with ACTB. Interacts with ARMC12. Interacts with TOMM20 and DNAH7. Interacts with RAP1A. Interacts with RAB10. In terms of tissue distribution, expressed in testis, specifically in elongating and elongated spermatids (at protein level). Expressed in the sperm midpiece (at protein level).

The protein localises to the cytoplasmic vesicle. It localises to the secretory vesicle. It is found in the acrosome. The protein resides in the cytoplasm. Its subcellular location is the cytoskeleton. Functionally, acts as a GTPase-activating protein for Rab family protein (s). Essential for the establishment of male fertility, and is required for both the production of normal sperm number and sperm function. Plays an important role in the formation of intact mitochondria, outer dense fibers and axoneme within the sperm tail. Essential for sperm mitochondrial sheath formation and for the interactions of ARMC12 with VDAC2 and VDAC3. May be involved in acrosome formation and cytoskeletal reorganization during spermiogenesis, possibly by regulating RAB3A activity. This chain is TBC1 domain family member 21, found in Mus musculus (Mouse).